A 230-amino-acid polypeptide reads, in one-letter code: Orotidine 5'-phosphate decarboxylase (230 aa).

Substrate contacts are provided by residues D10, K32, D59 to T68, T116, R177, Q186, G206, and R207. Catalysis depends on K61, which acts as the Proton donor.

The protein belongs to the OMP decarboxylase family. Type 1 subfamily. In terms of assembly, homodimer.

It catalyses the reaction orotidine 5'-phosphate + H(+) = UMP + CO2. It functions in the pathway pyrimidine metabolism; UMP biosynthesis via de novo pathway; UMP from orotate: step 2/2. Its function is as follows. Catalyzes the decarboxylation of orotidine 5'-monophosphate (OMP) to uridine 5'-monophosphate (UMP). The sequence is that of Orotidine 5'-phosphate decarboxylase from Methylacidiphilum infernorum (isolate V4) (Methylokorus infernorum (strain V4)).